Reading from the N-terminus, the 662-residue chain is UvrABC system protein B (662 aa).

The Helicase ATP-binding domain occupies 31–188 (DNIEGGEKAQ…NDLVDIQFER (158 aa)). 44-51 (GATGTGKT) serves as a coordination point for ATP. Residues 97-120 (YYDYYQPEAYVPSSDTYIEKDSSV) carry the Beta-hairpin motif. Residues 435–601 (QIDDLLGEIN…TIKKEIRDLI (167 aa)) enclose the Helicase C-terminal domain. In terms of domain architecture, UVR spans 626–661 (KELVKKLEKQMQEAVEVLDFELAAQIRDMMLEVKAL).

The protein belongs to the UvrB family. In terms of assembly, forms a heterotetramer with UvrA during the search for lesions. Interacts with UvrC in an incision complex.

It localises to the cytoplasm. The UvrABC repair system catalyzes the recognition and processing of DNA lesions. A damage recognition complex composed of 2 UvrA and 2 UvrB subunits scans DNA for abnormalities. Upon binding of the UvrA(2)B(2) complex to a putative damaged site, the DNA wraps around one UvrB monomer. DNA wrap is dependent on ATP binding by UvrB and probably causes local melting of the DNA helix, facilitating insertion of UvrB beta-hairpin between the DNA strands. Then UvrB probes one DNA strand for the presence of a lesion. If a lesion is found the UvrA subunits dissociate and the UvrB-DNA preincision complex is formed. This complex is subsequently bound by UvrC and the second UvrB is released. If no lesion is found, the DNA wraps around the other UvrB subunit that will check the other stand for damage. The protein is UvrABC system protein B of Streptococcus pneumoniae (strain Taiwan19F-14).